Reading from the N-terminus, the 345-residue chain is Fructose-1,6-bisphosphatase class 1 1 (345 aa).

Mg(2+) is bound by residues Glu90, Asp109, Leu111, and Asp112. Substrate is bound by residues 112 to 115 (DGSS) and Asn200. Residue Glu272 participates in Mg(2+) binding.

This sequence belongs to the FBPase class 1 family. In terms of assembly, homotetramer. Mg(2+) is required as a cofactor.

It localises to the cytoplasm. The enzyme catalyses beta-D-fructose 1,6-bisphosphate + H2O = beta-D-fructose 6-phosphate + phosphate. It participates in carbohydrate biosynthesis; gluconeogenesis. This is Fructose-1,6-bisphosphatase class 1 1 from Nitrobacter hamburgensis (strain DSM 10229 / NCIMB 13809 / X14).